A 354-amino-acid polypeptide reads, in one-letter code: MINTFNPEVRLAIHDLDKVGPAIPLENYEAALRAILTGKASPVETASFLASLHLTKAEEVPDILMQTVQILKSYSTPIANIEMVSPRFVDIVGTGGDGHNTFNVSTASAIVAAGAGLWVCKHGNKASTSASGSADLLMSFGCDLLNVTPKNIVSITEQCKFSFLFAPMCHPTLKNVAPIRKQLGLPTIFNLVGPLLNPIPTYARIIGVSKLSLGEVVAKTLLKLGAGRSLVVCGEEGLDEISPAGPTHTWLVRDGTITHEVYTPESFHLQSHPLSSVASGTPSANAILLEELLSNMLHANHPILDYVLMNTAALLHVAGMAESLREGVKIAQQSISSGAALRELSNFSTISQQP.

This sequence belongs to the anthranilate phosphoribosyltransferase family.

The enzyme catalyses N-(5-phospho-beta-D-ribosyl)anthranilate + diphosphate = 5-phospho-alpha-D-ribose 1-diphosphate + anthranilate. Its pathway is amino-acid biosynthesis; L-tryptophan biosynthesis; L-tryptophan from chorismate: step 2/5. This Schizosaccharomyces pombe (strain 972 / ATCC 24843) (Fission yeast) protein is Anthranilate phosphoribosyltransferase (trp4).